The primary structure comprises 130 residues: Small ribosomal subunit protein uS11c (130 aa).

It belongs to the universal ribosomal protein uS11 family. In terms of assembly, part of the 30S ribosomal subunit.

It is found in the plastid. It localises to the chloroplast. The chain is Small ribosomal subunit protein uS11c from Porphyra purpurea (Red seaweed).